We begin with the raw amino-acid sequence, 828 residues long: Protein ELFN1 (828 aa).

Residues 1–25 (MAGHGWGTAWVLVAAATLLHAGGLA) form the signal peptide. The Extracellular portion of the chain corresponds to 26–418 (QGDCWLIEGD…VPSPSTATHY (393 aa)). LRR repeat units lie at residues 61–82 (TIVDLRLNENRIRSVQYASLSR), 85–106 (NLTYLNLTKNEIGYIEDGAFSG), 109–130 (NLQVLQLGYNRLRNLTEGMLRG), 133–154 (KLEYLYLQANLIEVVMASAFWE), and 157–178 (NIVNIDLSMNRIQQLGSGTFAG). N-linked (GlcNAc...) asparagine glycans are attached at residues N85, N90, and N122. Positions 190–253 (NPFYCSCELL…LSKLQSVCTE (64 aa)) constitute an LRRCT domain. The N-linked (GlcNAc...) asparagine glycan is linked to N210. The segment at 258–293 (AEVLGPPRPVPGRSQPGHSPPPPPPEPSDMPCADDE) is disordered. The span at 275-285 (HSPPPPPPEPS) shows a compositional bias: pro residues. The 88-residue stretch at 312–399 (QTEARPSMKV…HNHTCLTICL (88 aa)) folds into the Fibronectin type-III domain. N376 carries an N-linked (GlcNAc...) asparagine glycan. A helical membrane pass occupies residues 419–439 (IMTILGCLFGMVLVLGAVYYC). Topologically, residues 440-828 (LRKRRRQEEK…WKGVSAQHKS (389 aa)) are cytoplasmic. S460 and S646 each carry phosphoserine. 2 disordered regions span residues 627-674 (HHSV…IEKS) and 697-731 (KSRQYGEHRHSYPGSHPAEPPAPPPPPPTHEGLGG). Residues 638 to 652 (RASTSSSGSARSPRT) show a composition bias toward low complexity. Residues 697–706 (KSRQYGEHRH) show a composition bias toward basic and acidic residues. Positions 714–725 (AEPPAPPPPPPT) are enriched in pro residues.

Interacts with PPP1CA. In terms of tissue distribution, selectively expressed in perialvear somatostatin (Sst)-containing interneurons.

Its subcellular location is the membrane. It localises to the cell projection. It is found in the dendrite. Postsynaptic protein that regulates circuit dynamics in the central nervous system by modulating the temporal dynamics of interneuron recruitment. Specifically present in excitatory synapses onto oriens-lacunosum molecular (OLM) interneurons and acts as a regulator of presynaptic release probability to direct the formation of highly facilitating pyramidal-OLM synapses. Inhibits phosphatase activity of protein phosphatase 1 (PP1) complexes. The polypeptide is Protein ELFN1 (Elfn1) (Mus musculus (Mouse)).